The sequence spans 256 residues: Glucosamine-6-phosphate deaminase (256 aa).

The active-site Proton acceptor; for enolization step is Asp-68. Asn-137 (for ring-opening step) is an active-site residue. The active-site Proton acceptor; for ring-opening step is the His-139. The active-site For ring-opening step is Glu-144.

This sequence belongs to the glucosamine/galactosamine-6-phosphate isomerase family. NagB subfamily.

It catalyses the reaction alpha-D-glucosamine 6-phosphate + H2O = beta-D-fructose 6-phosphate + NH4(+). It participates in amino-sugar metabolism; N-acetylneuraminate degradation; D-fructose 6-phosphate from N-acetylneuraminate: step 5/5. Functionally, catalyzes the reversible isomerization-deamination of glucosamine 6-phosphate (GlcN6P) to form fructose 6-phosphate (Fru6P) and ammonium ion. The protein is Glucosamine-6-phosphate deaminase of Mycoplasmopsis pulmonis (strain UAB CTIP) (Mycoplasma pulmonis).